We begin with the raw amino-acid sequence, 370 residues long: Uroporphyrinogen decarboxylase (370 aa).

Substrate-binding positions include 29-33, D79, Y155, S210, and H342; that span reads RQAGR.

Belongs to the uroporphyrinogen decarboxylase family. Homodimer.

It localises to the cytoplasm. It carries out the reaction uroporphyrinogen III + 4 H(+) = coproporphyrinogen III + 4 CO2. The protein operates within porphyrin-containing compound metabolism; protoporphyrin-IX biosynthesis; coproporphyrinogen-III from 5-aminolevulinate: step 4/4. Catalyzes the decarboxylation of four acetate groups of uroporphyrinogen-III to yield coproporphyrinogen-III. The chain is Uroporphyrinogen decarboxylase from Acidovorax ebreus (strain TPSY) (Diaphorobacter sp. (strain TPSY)).